Consider the following 92-residue polypeptide: Large ribosomal subunit protein eL43 (92 aa).

The C4-type zinc finger occupies 39-60 (CSFCGKKAVKRGAAGIWNCSSC).

The protein belongs to the eukaryotic ribosomal protein eL43 family.

The polypeptide is Large ribosomal subunit protein eL43 (RPL43) (Eremothecium gossypii (strain ATCC 10895 / CBS 109.51 / FGSC 9923 / NRRL Y-1056) (Yeast)).